We begin with the raw amino-acid sequence, 56 residues long: Large ribosomal subunit protein bL32 (56 aa).

It belongs to the bacterial ribosomal protein bL32 family.

The sequence is that of Large ribosomal subunit protein bL32 from Bacillus cereus (strain ATCC 14579 / DSM 31 / CCUG 7414 / JCM 2152 / NBRC 15305 / NCIMB 9373 / NCTC 2599 / NRRL B-3711).